The chain runs to 1217 residues: CST complex subunit CTC1 (1217 aa).

The tract at residues 328 to 347 (EADPKPLPMPSNSEDKKDPE) is disordered.

This sequence belongs to the CTC1 family. Component of the CST complex, composed of TEN1/C17orf106, CTC1/C17orf68 and STN1; in the complex interacts directly with STN1. Interacts with ACD and POT1.

Its subcellular location is the nucleus. The protein localises to the chromosome. It localises to the telomere. Its function is as follows. Component of the CST complex proposed to act as a specialized replication factor promoting DNA replication under conditions of replication stress or natural replication barriers such as the telomere duplex. The CST complex binds single-stranded DNA with high affinity in a sequence-independent manner, while isolated subunits bind DNA with low affinity by themselves. Initially the CST complex has been proposed to protect telomeres from DNA degradation. However, the CST complex has been shown to be involved in several aspects of telomere replication. The CST complex inhibits telomerase and is involved in telomere length homeostasis; it is proposed to bind to newly telomerase-synthesized 3' overhangs and to terminate telomerase action implicating the association with the ACD:POT1 complex thus interfering with its telomerase stimulation activity. The CST complex is also proposed to be involved in fill-in synthesis of the telomeric C-strand probably implicating recruitment and activation of DNA polymerase alpha. The CST complex facilitates recovery from many forms of exogenous DNA damage; seems to be involved in the re-initiation of DNA replication at repaired forks and/or dormant origins. Involved in telomere maintenance. Involved in genome stability. May be in involved in telomeric C-strand fill-in during late S/G2 phase. In Homo sapiens (Human), this protein is CST complex subunit CTC1 (CTC1).